A 511-amino-acid polypeptide reads, in one-letter code: Maturase K (511 aa).

This sequence belongs to the intron maturase 2 family. MatK subfamily.

It localises to the plastid. The protein resides in the chloroplast. In terms of biological role, usually encoded in the trnK tRNA gene intron. Probably assists in splicing its own and other chloroplast group II introns. This is Maturase K from Mandragora officinarum (Mandrake).